Reading from the N-terminus, the 236-residue chain is Ribonuclease 3 (236 aa).

An RNase III domain is found at 6-140 (FLDFLKQNRI…FIGAVAQDQG (135 aa)). Mg(2+) is bound at residue Glu46. The active site involves Asp50. Asp126 and Glu129 together coordinate Mg(2+). The active site involves Glu129. Residues 166-231 (DYKTIFQEQA…AKNAILKLDD (66 aa)) enclose the DRBM domain.

The protein belongs to the ribonuclease III family. As to quaternary structure, homodimer. The cofactor is Mg(2+).

It localises to the cytoplasm. The enzyme catalyses Endonucleolytic cleavage to 5'-phosphomonoester.. Functionally, digests double-stranded RNA. Involved in the processing of primary rRNA transcript to yield the immediate precursors to the large and small rRNAs (23S and 16S). Processes some mRNAs, and tRNAs when they are encoded in the rRNA operon. Processes pre-crRNA and tracrRNA of type II CRISPR loci if present in the organism. In Ureaplasma parvum serovar 3 (strain ATCC 700970), this protein is Ribonuclease 3.